Here is a 659-residue protein sequence, read N- to C-terminus: 1,4-alpha-glucan branching enzyme GlgB 2 (659 aa).

The tract at residues 1 to 26 (MRNYKELKHEKNGNVTEKIGENKGKS) is disordered. Catalysis depends on Asp-337, which acts as the Nucleophile. Glu-390 serves as the catalytic Proton donor.

This sequence belongs to the glycosyl hydrolase 13 family. GlgB subfamily. Monomer.

It carries out the reaction Transfers a segment of a (1-&gt;4)-alpha-D-glucan chain to a primary hydroxy group in a similar glucan chain.. It functions in the pathway glycan biosynthesis; glycogen biosynthesis. Functionally, catalyzes the formation of the alpha-1,6-glucosidic linkages in glycogen by scission of a 1,4-alpha-linked oligosaccharide from growing alpha-1,4-glucan chains and the subsequent attachment of the oligosaccharide to the alpha-1,6 position. The chain is 1,4-alpha-glucan branching enzyme GlgB 2 from Clostridium perfringens (strain SM101 / Type A).